We begin with the raw amino-acid sequence, 449 residues long: tRNA-2-methylthio-N(6)-dimethylallyladenosine synthase (449 aa).

The region spanning 13 to 128 (RRIFIETYGC…LPHLIGTVEK (116 aa)) is the MTTase N-terminal domain. [4Fe-4S] cluster-binding residues include Cys-22, Cys-58, Cys-92, Cys-166, Cys-170, and Cys-173. The Radical SAM core domain occupies 152 to 383 (SRIKISGFIS…ITLQLKISLM (232 aa)). The TRAM domain occupies 386-449 (KENIGKTMEI…AATLFGDPKL (64 aa)).

This sequence belongs to the methylthiotransferase family. MiaB subfamily. As to quaternary structure, monomer. Requires [4Fe-4S] cluster as cofactor.

The protein resides in the cytoplasm. It carries out the reaction N(6)-dimethylallyladenosine(37) in tRNA + (sulfur carrier)-SH + AH2 + 2 S-adenosyl-L-methionine = 2-methylsulfanyl-N(6)-dimethylallyladenosine(37) in tRNA + (sulfur carrier)-H + 5'-deoxyadenosine + L-methionine + A + S-adenosyl-L-homocysteine + 2 H(+). Catalyzes the methylthiolation of N6-(dimethylallyl)adenosine (i(6)A), leading to the formation of 2-methylthio-N6-(dimethylallyl)adenosine (ms(2)i(6)A) at position 37 in tRNAs that read codons beginning with uridine. The polypeptide is tRNA-2-methylthio-N(6)-dimethylallyladenosine synthase (Azobacteroides pseudotrichonymphae genomovar. CFP2).